A 418-amino-acid polypeptide reads, in one-letter code: Mitochondrial distribution and morphology protein 10 (418 aa).

Belongs to the MDM10 family. In terms of assembly, component of the ER-mitochondria encounter structure (ERMES) or MDM complex, composed of MMM1, MDM10, MDM12 and MDM34. Associates with the mitochondrial outer membrane sorting assembly machinery SAM(core) complex.

The protein localises to the mitochondrion outer membrane. Its function is as follows. Component of the ERMES/MDM complex, which serves as a molecular tether to connect the endoplasmic reticulum and mitochondria. Components of this complex are involved in the control of mitochondrial shape and protein biogenesis and may function in phospholipid exchange. MDM10 is involved in the late assembly steps of the general translocase of the mitochondrial outer membrane (TOM complex). Functions in the TOM40-specific route of the assembly of outer membrane beta-barrel proteins, including the association of TOM40 with the receptor TOM22 and small TOM proteins. Can associate with the SAM(core) complex as well as the MDM12-MMM1 complex, both involved in late steps of the major beta-barrel assembly pathway, that is responsible for biogenesis of all outer membrane beta-barrel proteins. May act as a switch that shuttles between both complexes and channels precursor proteins into the TOM40-specific pathway. Plays a role in mitochondrial morphology and in the inheritance of mitochondria. This Meyerozyma guilliermondii (strain ATCC 6260 / CBS 566 / DSM 6381 / JCM 1539 / NBRC 10279 / NRRL Y-324) (Yeast) protein is Mitochondrial distribution and morphology protein 10.